Here is a 169-residue protein sequence, read N- to C-terminus: PTS system glucose-specific EIIA component (169 aa).

One can recognise a PTS EIIA type-1 domain in the interval 39-143 (DVVFAEKIVG…STLTPVVISN (105 aa)). 2 residues coordinate Zn(2+): H76 and H91. The Tele-phosphohistidine intermediate; for EIIA activity role is filled by H91. H91 carries the post-translational modification Phosphohistidine; by HPr.

Heterodimer with glycerol kinase (glpk). Requires Zn(2+) as cofactor.

The protein localises to the cytoplasm. Functionally, the phosphoenolpyruvate-dependent sugar phosphotransferase system (sugar PTS), a major carbohydrate active transport system, catalyzes the phosphorylation of incoming sugar substrates concomitantly with their translocation across the cell membrane. The enzyme II complex composed of PtsG and Crr is involved in glucose transport. This chain is PTS system glucose-specific EIIA component (crr), found in Escherichia coli O6:H1 (strain CFT073 / ATCC 700928 / UPEC).